Reading from the N-terminus, the 153-residue chain is MTYTVEVLVDDDLAVDAALVERAAQAVLTAEQVPAGCEVCIRITTDAELHRLNRDFRGVDAPTDVLSFADDGNSSQFVTAPNLPRYLGDIAISYDRVLVQAAEYGHSPARELAYLTVHGMLHLLGYDHERGPADEALMRAREEAVMTALGLPR.

Zn(2+) is bound by residues H118, H122, and H128.

It belongs to the endoribonuclease YbeY family. Requires Zn(2+) as cofactor.

Its subcellular location is the cytoplasm. Functionally, single strand-specific metallo-endoribonuclease involved in late-stage 70S ribosome quality control and in maturation of the 3' terminus of the 16S rRNA. This Chloroflexus aggregans (strain MD-66 / DSM 9485) protein is Endoribonuclease YbeY.